The following is a 191-amino-acid chain: Fe/S biogenesis protein NfuA (191 aa).

[4Fe-4S] cluster is bound by residues C149 and C152.

The protein belongs to the NfuA family. In terms of assembly, homodimer. [4Fe-4S] cluster serves as cofactor.

Functionally, involved in iron-sulfur cluster biogenesis. Binds a 4Fe-4S cluster, can transfer this cluster to apoproteins, and thereby intervenes in the maturation of Fe/S proteins. Could also act as a scaffold/chaperone for damaged Fe/S proteins. The polypeptide is Fe/S biogenesis protein NfuA (Escherichia coli O7:K1 (strain IAI39 / ExPEC)).